Consider the following 152-residue polypeptide: Lipoprotein signal peptidase (152 aa).

A run of 2 helical transmembrane segments spans residues 55–75 (NKMW…VFYM) and 85–105 (LGIS…DRVF). Catalysis depends on residues Asp111 and Asp129. A helical transmembrane segment spans residues 124–144 (VFNIADSALCIGVVLIIIQTL).

This sequence belongs to the peptidase A8 family.

It localises to the cell membrane. The catalysed reaction is Release of signal peptides from bacterial membrane prolipoproteins. Hydrolyzes -Xaa-Yaa-Zaa-|-(S,diacylglyceryl)Cys-, in which Xaa is hydrophobic (preferably Leu), and Yaa (Ala or Ser) and Zaa (Gly or Ala) have small, neutral side chains.. Its pathway is protein modification; lipoprotein biosynthesis (signal peptide cleavage). Functionally, this protein specifically catalyzes the removal of signal peptides from prolipoproteins. This Bacillus cereus (strain AH187) protein is Lipoprotein signal peptidase.